We begin with the raw amino-acid sequence, 191 residues long: Pyridoxal 5'-phosphate synthase subunit PdxT (191 aa).

52–54 serves as a coordination point for L-glutamine; the sequence is GES. Cys-81 serves as the catalytic Nucleophile. L-glutamine-binding positions include Arg-108 and 136–137; that span reads IR. Residues His-172 and Glu-174 each act as charge relay system in the active site.

It belongs to the glutaminase PdxT/SNO family. In the presence of PdxS, forms a dodecamer of heterodimers. Only shows activity in the heterodimer.

The enzyme catalyses aldehydo-D-ribose 5-phosphate + D-glyceraldehyde 3-phosphate + L-glutamine = pyridoxal 5'-phosphate + L-glutamate + phosphate + 3 H2O + H(+). The catalysed reaction is L-glutamine + H2O = L-glutamate + NH4(+). The protein operates within cofactor biosynthesis; pyridoxal 5'-phosphate biosynthesis. In terms of biological role, catalyzes the hydrolysis of glutamine to glutamate and ammonia as part of the biosynthesis of pyridoxal 5'-phosphate. The resulting ammonia molecule is channeled to the active site of PdxS. This is Pyridoxal 5'-phosphate synthase subunit PdxT from Actinobacillus pleuropneumoniae serotype 5b (strain L20).